Consider the following 285-residue polypeptide: Flagellar filament 30.7 kDa core protein (285 aa).

The protein belongs to the bacterial flagellin family. As to quaternary structure, the core of the flagellum consists of several antigenically related polypeptides. Glycosylated. Glycosylation is not essential for motility.

It localises to the periplasmic flagellum. The protein localises to the periplasm. Component of the core of the flagella. This is Flagellar filament 30.7 kDa core protein (flaB3) from Treponema maltophilum.